Consider the following 495-residue polypeptide: Transcription termination/antitermination protein NusA (495 aa).

The S1 motif domain occupies 135–200 (GEIITGVVKK…RGAQLFVTRS (66 aa)). The region spanning 302 to 368 (KHTMDIAVEA…FTKYLDIDED (67 aa)) is the KH domain. 2 repeat units span residues 364 to 414 (DIDE…KNAL) and 439 to 489 (GVDR…RNIC). Positions 364–489 (DIDEDFATVL…ALIMAARNIC (126 aa)) are 2 X 51 AA approximate repeats.

Belongs to the NusA family. Monomer. Binds directly to the core enzyme of the DNA-dependent RNA polymerase and to nascent RNA.

It localises to the cytoplasm. Participates in both transcription termination and antitermination. This chain is Transcription termination/antitermination protein NusA, found in Shigella flexneri.